Reading from the N-terminus, the 693-residue chain is Elongation factor G (693 aa).

The tr-type G domain occupies 8-283 (PQQRNIGIMA…AVVEYLPSPV (276 aa)). Residues 17–24 (AHIDAGKT), 81–85 (DTPGH), and 135–138 (NKMD) each bind GTP.

The protein belongs to the TRAFAC class translation factor GTPase superfamily. Classic translation factor GTPase family. EF-G/EF-2 subfamily.

The protein resides in the cytoplasm. Its function is as follows. Catalyzes the GTP-dependent ribosomal translocation step during translation elongation. During this step, the ribosome changes from the pre-translocational (PRE) to the post-translocational (POST) state as the newly formed A-site-bound peptidyl-tRNA and P-site-bound deacylated tRNA move to the P and E sites, respectively. Catalyzes the coordinated movement of the two tRNA molecules, the mRNA and conformational changes in the ribosome. The sequence is that of Elongation factor G from Oleidesulfovibrio alaskensis (strain ATCC BAA-1058 / DSM 17464 / G20) (Desulfovibrio alaskensis).